Consider the following 200-residue polypeptide: NADH-quinone oxidoreductase subunit B (200 aa).

Positions 79, 80, 144, and 174 each coordinate [4Fe-4S] cluster.

It belongs to the complex I 20 kDa subunit family. NDH-1 is composed of 14 different subunits. Subunits NuoB, C, D, E, F, and G constitute the peripheral sector of the complex. [4Fe-4S] cluster serves as cofactor.

The protein resides in the cell inner membrane. The enzyme catalyses a quinone + NADH + 5 H(+)(in) = a quinol + NAD(+) + 4 H(+)(out). Its function is as follows. NDH-1 shuttles electrons from NADH, via FMN and iron-sulfur (Fe-S) centers, to quinones in the respiratory chain. The immediate electron acceptor for the enzyme in this species is believed to be ubiquinone. Couples the redox reaction to proton translocation (for every two electrons transferred, four hydrogen ions are translocated across the cytoplasmic membrane), and thus conserves the redox energy in a proton gradient. The protein is NADH-quinone oxidoreductase subunit B of Caulobacter vibrioides (strain NA1000 / CB15N) (Caulobacter crescentus).